Reading from the N-terminus, the 130-residue chain is Large ribosomal subunit protein bL20 (130 aa).

This sequence belongs to the bacterial ribosomal protein bL20 family.

Its function is as follows. Binds directly to 23S ribosomal RNA and is necessary for the in vitro assembly process of the 50S ribosomal subunit. It is not involved in the protein synthesizing functions of that subunit. The polypeptide is Large ribosomal subunit protein bL20 (Salinispora tropica (strain ATCC BAA-916 / DSM 44818 / JCM 13857 / NBRC 105044 / CNB-440)).